A 3423-amino-acid chain; its full sequence is Genome polyprotein (3423 aa).

A disordered region spans residues 1-25 (MKNPKKKSGGFRIVNMLKRGVARVS). Residues 1–104 (MKNPKKKSGG…INARKEKKRR (104 aa)) lie on the Cytoplasmic side of the membrane. The hydrophobic; homodimerization of capsid protein C stretch occupies residues 37–72 (LLLGHGPIRMVLAILAFLRFTAIKPSLGLINRWGSV). Residues 105-122 (GADTSVGIVGLLLTTAMA) constitute a propeptide, ER anchor for capsid protein C, removed in mature form by serine protease NS3. Residues 105 to 125 (GADTSVGIVGLLLTTAMAAEV) traverse the membrane as a helical segment. The Extracellular portion of the chain corresponds to 126–249 (TRRGSAYYMY…YTKHLIRVEN (124 aa)). Asn-192 is a glycosylation site (N-linked (GlcNAc...) asparagine; by host). A helical membrane pass occupies residues 250 to 269 (WIFRNPGFALAAAAIAWLLG). The Cytoplasmic segment spans residues 270-274 (SSTSQ). Residues 275 to 290 (KVIYLVMILLIAPAYS) traverse the membrane as a helical segment. At 291–745 (IRCIGVSNRD…HQIFGAAFKS (455 aa)) the chain is on the extracellular side. Lys-328 participates in a covalent cross-link: Glycyl lysine isopeptide (Lys-Gly) (interchain with G-Cter in ubiquitin). Disulfide bonds link Cys-350-Cys-406 and Cys-382-Cys-411. A fusion peptide region spans residues 388–401 (DRGWGNGCGLFGKG). A glycan (N-linked (GlcNAc...) asparagine; by host) is linked at Asn-444. 2 disulfide bridges follow: Cys-480–Cys-581 and Cys-598–Cys-629. Lys-571 is covalently cross-linked (Glycyl lysine isopeptide (Lys-Gly) (interchain with G-Cter in ubiquitin)). A helical membrane pass occupies residues 746–767 (LFGGMSWFSQILIGTLLMWLGL). Residues 768-773 (NTKNGS) lie on the Cytoplasmic side of the membrane. A helical transmembrane segment spans residues 774-794 (ISLMCLALGGVLIFLSTAVSA). At 795–1177 (DVGCSVDFSK…EGLKKRMTTK (383 aa)) the chain is on the lumenal side. Cystine bridges form between Cys-798-Cys-809, Cys-849-Cys-937, Cys-973-Cys-1017, Cys-1074-Cys-1123, Cys-1085-Cys-1106, and Cys-1107-Cys-1110. N-linked (GlcNAc...) asparagine; by host glycosylation is found at Asn-924 and Asn-1001. A helical membrane pass occupies residues 1178 to 1198 (IIISTSMAVLVAMILGGFSMS). At 1199-1220 (DLAKLAILMGATFAEMNTGGDV) the chain is on the cytoplasmic side. A helical membrane pass occupies residues 1221 to 1241 (AHLALIAAFKVRPALLVSFIF). Over 1242 to 1270 (RANWTPRESMLLALASCLLQTAISALEGD) the chain is Lumenal. The helical transmembrane segment at 1271–1291 (LMVLINGFALAWLAIRAMVVP) threads the bilayer. The Cytoplasmic portion of the chain corresponds to 1292-1295 (RTDN). The chain crosses the membrane as a helical span at residues 1296–1316 (ITLAILAALTPLARGTLLVAW). Residues 1317-1345 (RAGLATCGGFMLLSLKGKGSVKKNLPFVM) lie on the Lumenal side of the membrane. The chain crosses the membrane as a helical span at residues 1346-1366 (ALGLTAVRLVDPINVVGLLLL). The Cytoplasmic segment spans residues 1367 to 1373 (TRSGKRS). Residues 1374-1394 (WPPSEVLTAVGLICALAGGFA) form a helical membrane-spanning segment. Over 1395-1397 (KAD) the chain is Lumenal. A helical transmembrane segment spans residues 1398-1418 (IEMAGPMAAVGLLIVSYVVSG). Topologically, residues 1419-1472 (KSVDMYIERAGDITWEKDAEVTGNSPRLDVALDESGDFSLVEDDGPPMREIILK) are cytoplasmic. The tract at residues 1425–1464 (IERAGDITWEKDAEVTGNSPRLDVALDESGDFSLVEDDGP) is interacts with and activates NS3 protease. The tract at residues 1429-1451 (GDITWEKDAEVTGNSPRLDVALD) is disordered. The segment at residues 1473-1493 (VVLMTICGMNPIAIPFAAGAW) is an intramembrane region (helical). At 1494 to 2170 (YVYVKTGKRS…KAAAAQLPET (677 aa)) the chain is on the lumenal side. The Peptidase S7 domain maps to 1503-1680 (SGALWDVPAP…RREEETPVEC (178 aa)). Residues His-1553, Asp-1577, and Ser-1637 each act as charge relay system; for serine protease NS3 activity in the active site. A Helicase ATP-binding domain is found at 1683–1839 (PSMLKKKQLT…DSNSPIMDTE (157 aa)). The important for RNA-binding stretch occupies residues 1687–1690 (KKKQ). 1696–1703 (LHPGAGKT) is an ATP binding site. Residues 1787 to 1790 (DEAH) carry the DEAH box motif. In terms of domain architecture, Helicase C-terminal spans 1834–2013 (PIMDTEVEVP…GLIASLYRPE (180 aa)). The residue at position 1891 (Lys-1891) is an N6-acetyllysine; by host. Residues 2171–2191 (LETIMLLGLLGTVSLGIFFVL) traverse the membrane as a helical segment. The Lumenal segment spans residues 2192–2195 (MRNK). Positions 2196–2216 (GIGKMGFGMVTLGASAWLMWL) form an intramembrane region, helical. Over 2217-2218 (SE) the chain is Cytoplasmic. Residues 2219 to 2239 (IEPARIACVLIVVFLLLVVLI) form a helical membrane-spanning segment. Over 2240–2254 (PEPEKQRSPQDNQMA) the chain is Lumenal. The helical intramembrane region spans 2255 to 2269 (IIIMVAVGLLGLITA). At 2270 to 2307 (NELGWLERTKSDLSHLMGRREEGATIGFSMDIDLRPAS) the chain is on the lumenal side. An intramembrane region (helical) is located at residues 2308-2328 (AWAIYAALTTFITPAVQHAVT). Residues 2329-2344 (TSYNNYSLMAMATQAG) lie on the Lumenal side of the membrane. The chain crosses the membrane as a helical span at residues 2345–2365 (VLFGMGKGMPFYAWDFGVPLL). The Cytoplasmic segment spans residues 2366-2375 (MIGCYSQLTP). The helical transmembrane segment at 2376–2396 (LTLIVAIILLVAHYMYLIPGL) threads the bilayer. Residues 2397 to 2441 (QAAAARAAQKRTAAGIMKNPVVDGIVVTDIDTMTIDPQVEKKMGQ) lie on the Lumenal side of the membrane. A helical transmembrane segment spans residues 2442–2462 (VLLIAVAVSSAILSRTAWGWG). At 2463-3423 (EAGALITAAT…GEEGSTPGVL (961 aa)) the chain is on the cytoplasmic side. In terms of domain architecture, mRNA cap 0-1 NS5-type MT spans 2521–2785 (GGGTGETLGE…DVNLGSGTRA (265 aa)). 2533-2539 (KARLNQM) lines the GTP pocket. An S-adenosyl-L-methionine-binding site is contributed by Ser-2576. Ser-2576 is subject to Phosphoserine. The active-site For 2'-O-MTase activity is Lys-2581. The tract at residues 2597–2600 (VIDL) is SUMO-interacting motif (SIM). Residues Gly-2606, Trp-2607, Thr-2624, Lys-2625, His-2630, Glu-2631, Asp-2651, Val-2652, Asp-2666, and Ile-2667 each contribute to the S-adenosyl-L-methionine site. Residue Asp-2666 is the For 2'-O-MTase activity of the active site. 2669-2675 (ESSSSPE) provides a ligand contact to GTP. The active-site For 2'-O-MTase activity is Lys-2702. Residue 2733–2735 (RNS) coordinates GTP. The active-site For 2'-O-MTase activity is the Glu-2738. Tyr-2740 lines the S-adenosyl-L-methionine pocket. The Nuclear localization signal (NLS) motif lies at 2908–2914 (KHKRPRV). Residues Glu-2959, His-2963, Cys-2968, and Cys-2971 each coordinate Zn(2+). Residues 3049–3199 (GRMYADDTAG…KPIDDRFAHA (151 aa)) form the RdRp catalytic domain. Zn(2+)-binding residues include His-3234, Cys-3250, and Cys-3369.

It in the N-terminal section; belongs to the class I-like SAM-binding methyltransferase superfamily. mRNA cap 0-1 NS5-type methyltransferase family. In terms of assembly, homodimer. Interacts with host SERTAD3; this interaction promotes capsid protein C degradation. Interacts with host CAPRIN1; this interaction is probably linked to the inhibition of stress granules formation by the virus. Interacts with host G3BP1; this interaction is probably linked to the inhibition of stress granules formation by the virus. Forms heterodimers with envelope protein E in the endoplasmic reticulum and Golgi. Interacts with non-structural protein 2A. As to quaternary structure, homodimer; in the endoplasmic reticulum and Golgi. Interacts with host TYRO3, AXL and DC-SIGN proteins. Interacts with non-structural protein 2A. Interacts with host HAVCR1; this interaction likely mediates virus attachment to host cell. Interacts with host NCAM1. Interacts with host HSPA5. Interacts with Aedes aegypti SRPN25, APY and venom allergen-1 salivary proteins; the interactions do not affect Zika virus replication in human endothelial cells and keratinocytes. In terms of assembly, homodimer; Homohexamer when secreted. Interacts with host TBK1. Interacts with host USP8. Interacts with envelope protein E. Interacts with the structural protein prM/E complex, and the NS2B/NS3 protease complex. As to quaternary structure, forms a heterodimer with serine protease NS3. May form homooligomers. Interacts with human SPCS1. Interacts with non-structural protein 2A. In terms of assembly, forms a heterodimer with NS2B. Interacts with NS4B. Interacts with unphosphorylated RNA-directed RNA polymerase NS5; this interaction stimulates RNA-directed RNA polymerase NS5 guanylyltransferase activity. Interacts with non-structural protein 2A. Interacts with host SHFL; this interaction promotes NS3 degradation via a lysosome-dependent pathway. Interacts with host CEP63; this interaction disorganizes the centrosome and inhibits host innate immune response. May interact with host ANKLE2; the interaction may cause defects in brain development, such as microcephaly. May interact with host SRPRA and SEC61G. As to quaternary structure, interacts with serine protease NS3. Interacts with NS1. In terms of assembly, homodimer; dimerization may negatively regulate the GTase activity, a crucial step in the capping process. Interacts with host STAT2; this interaction inhibits the phosphorylation of the latter, and, when all viral proteins are present (polyprotein), targets STAT2 for degradation. Interacts with host TBK1 and IKBKE; these interactions lead to the inhibition of the host RIG-I signaling pathway. Interacts with host PAF1 complex; the interaction may prevent the recruitment of the host PAF1 complex to interferon-responsive genes, and thus reduces the immune response. Interacts with serine protease NS3. Interacts with host KPNA2. Interacts with host ZSWIM8; this interaction allows STAT2 binding to ZSWIM8 and subsequent proteasomal degradation leading to inhibition of interferon signaling. Specific enzymatic cleavages in vivo yield mature proteins. Cleavages in the lumen of endoplasmic reticulum are performed by host signal peptidase, whereas cleavages in the cytoplasmic side are performed by serine protease NS3. Signal cleavage at the 2K-4B site requires a prior NS3 protease-mediated cleavage at the 4A-2K site. In terms of processing, cleaved in post-Golgi vesicles by a host furin, releasing the mature small envelope protein M, and peptide pr. This cleavage is incomplete as up to 30% of viral particles still carry uncleaved prM. Post-translationally, N-glycosylation plays a role in virulence in mammalian and mosquito hosts, but may have no effect on neurovirulence. Ubiquitination by host TRIM7 promotes virus attachment and fusion of the virus and the host endosome membrane. In terms of processing, N-glycosylated. The excreted form is glycosylated, which is required for efficient secretion of the protein from infected cells. Post-translationally, ubiquitination by host TRIM22 leads to proteasomal degradation. Acetylated by host KAT5. Acetylation modulates NS3 RNA-binding and unwinding activities and plays an important positive role for viral replication. In terms of processing, phosphorylated on serines residues. This phosphorylation may trigger NS5 nuclear localization. Post-translationally, sumoylated, required for regulating IFN induced interferon stimulated genes/ISGs.

The protein resides in the virion. It localises to the host nucleus. The protein localises to the host cytoplasm. Its subcellular location is the host perinuclear region. It is found in the secreted. The protein resides in the virion membrane. It localises to the host endoplasmic reticulum membrane. It catalyses the reaction a 5'-end (5'-triphosphoguanosine)-ribonucleoside in mRNA + S-adenosyl-L-methionine = a 5'-end (N(7)-methyl 5'-triphosphoguanosine)-ribonucleoside in mRNA + S-adenosyl-L-homocysteine. The enzyme catalyses a 5'-end (N(7)-methyl 5'-triphosphoguanosine)-ribonucleoside in mRNA + S-adenosyl-L-methionine = a 5'-end (N(7)-methyl 5'-triphosphoguanosine)-(2'-O-methyl-ribonucleoside) in mRNA + S-adenosyl-L-homocysteine + H(+). The catalysed reaction is RNA(n) + a ribonucleoside 5'-triphosphate = RNA(n+1) + diphosphate. It carries out the reaction Selective hydrolysis of -Xaa-Xaa-|-Yaa- bonds in which each of the Xaa can be either Arg or Lys and Yaa can be either Ser or Ala.. It catalyses the reaction a ribonucleoside 5'-triphosphate + H2O = a ribonucleoside 5'-diphosphate + phosphate + H(+). The enzyme catalyses ATP + H2O = ADP + phosphate + H(+). Plays a role in virus budding by binding to the cell membrane and gathering the viral RNA into a nucleocapsid that forms the core of the mature virus particle. During virus entry, may induce genome penetration into the host cytoplasm after hemifusion induced by the surface proteins. Can migrate to the cell nucleus where it modulates host functions. Inhibits the integrated stress response (ISR) in the infected cell. Functionally, inhibits RNA silencing by interfering with host Dicer. Its function is as follows. Prevents premature fusion activity of envelope proteins in trans-Golgi by binding to envelope protein E at pH 6.0. After virion release in extracellular space, gets dissociated from E dimers. In terms of biological role, plays a role in host immune defense modulation and protection of envelope protein E during virion synthesis. PrM-E cleavage is inefficient, many virions are only partially matured and immature prM-E proteins could play a role in immune evasion. Contributes to fetal microcephaly in humans. Acts as a chaperone for envelope protein E during intracellular virion assembly by masking and inactivating envelope protein E fusion peptide. prM is the only viral peptide matured by host furin in the trans-Golgi network probably to avoid catastrophic activation of the viral fusion activity in acidic Golgi compartment prior to virion release. May play a role in virus budding. Exerts cytotoxic effects by activating a mitochondrial apoptotic pathway through M ectodomain. May display a viroporin activity. Functionally, binds to host cell surface receptors and mediates fusion between viral and cellular membranes. Efficient virus attachment to cell is, at least in part, mediated by host HAVCR1 in a cell-type specific manner. In addition, host NCAM1 can also be used as entry receptor. Interaction with host HSPA5 plays an important role in the early stages of infection as well. Envelope protein is synthesized in the endoplasmic reticulum and forms a heterodimer with protein prM. The heterodimer plays a role in virion budding in the ER, and the newly formed immature particle is covered with 60 spikes composed of heterodimers between precursor prM and envelope protein E. The virion is transported to the Golgi apparatus where the low pH causes the dissociation of PrM-E heterodimers and formation of E homodimers. PrM-E cleavage is inefficient, many virions are only partially matured and immature prM-E proteins could play a role in immune evasion. Its function is as follows. Plays a role in the inhibition of host RLR-induced interferon-beta activation by targeting TANK-binding kinase 1/TBK1. In addition, recruits the host deubiquitinase USP8 to cleave 'Lys-11'-linked polyubiquitin chains from caspase-1/CASP1 thus inhibiting its proteasomal degradation. In turn, stabilized CASP1 promotes cleavage of cGAS, which inhibits its ability to recognize mitochondrial DNA release and initiate type I interferon signaling. In terms of biological role, component of the viral RNA replication complex that recruits genomic RNA, the structural protein prM/E complex, and the NS2B/NS3 protease complex to the virion assembly site and orchestrates virus morphogenesis. Antagonizes also the host MDA5-mediated induction of alpha/beta interferon antiviral response. May disrupt adherens junction formation and thereby impair proliferation of radial cells in the host cortex. Required cofactor for the serine protease function of NS3. Functionally, displays three enzymatic activities: serine protease, NTPase and RNA helicase. NS3 serine protease, in association with NS2B, performs its autocleavage and cleaves the polyprotein at dibasic sites in the cytoplasm: C-prM, NS2A-NS2B, NS2B-NS3, NS3-NS4A, NS4A-2K and NS4B-NS5. NS3 RNA helicase binds RNA and unwinds dsRNA in the 3' to 5' direction. Inhibits the integrated stress response (ISR) in the infected cell by blocking stress granules assembly. Disrupts host centrosome organization in a CEP63-dependent manner to degrade host TBK1 and inhibits innate immune response. Its function is as follows. Regulates the ATPase activity of the NS3 helicase activity. NS4A allows NS3 helicase to conserve energy during unwinding. Cooperatively with NS4B suppresses the Akt-mTOR pathway and leads to cellular dysregulation. By inhibiting host ANKLE2 functions, may cause defects in brain development, such as microcephaly. Also antagonizes the host MDA5-mediated induction of alpha/beta interferon antiviral response. Inhibits the integrated stress response (ISR) in the infected cell by blocking stress granules assembly. In terms of biological role, functions as a signal peptide for NS4B and is required for the interferon antagonism activity of the latter. Induces the formation of ER-derived membrane vesicles where the viral replication takes place. Also plays a role in the inhibition of host RLR-induced interferon-beta production at TANK-binding kinase 1/TBK1 level. Cooperatively with NS4A suppresses the Akt-mTOR pathway and leads to cellular dysregulation. Functionally, replicates the viral (+) and (-) RNA genome, and performs the capping of genomes in the cytoplasm. Methylates viral RNA cap at guanine N-7 and ribose 2'-O positions. Once sufficient NS5 is expressed, binds to the cap-proximal structure and inhibits further translation of the viral genome. Besides its role in RNA genome replication, also prevents the establishment of a cellular antiviral state by blocking the interferon-alpha/beta (IFN-alpha/beta) signaling pathway. Mechanistically, interferes with host kinases TBK1 and IKKE upstream of interferon regulatory factor 3/IRF3 to inhibit the RIG-I pathway. Also antagonizes type I interferon signaling by targeting STAT2 for degradation by the proteasome thereby preventing activation of JAK-STAT signaling pathway. Mechanistically, acts as a scaffold protein to connect host ZSWIM8/CUL3 ligase complex and STAT2, leading to STAT2 degradation. Within the host nucleus, disrupts host SUMO1 and STAT2 co-localization with PML, resulting in PML degradation. May also reduce immune responses by preventing the recruitment of the host PAF1 complex to interferon-responsive genes. This is Genome polyprotein from Zika virus (isolate ZIKV/Human/French Polynesia/10087PF/2013) (ZIKV).